The sequence spans 103 residues: Large ribosomal subunit protein bL21 (103 aa).

Belongs to the bacterial ribosomal protein bL21 family. Part of the 50S ribosomal subunit. Contacts protein L20.

In terms of biological role, this protein binds to 23S rRNA in the presence of protein L20. In Shewanella amazonensis (strain ATCC BAA-1098 / SB2B), this protein is Large ribosomal subunit protein bL21.